The primary structure comprises 269 residues: Triosephosphate isomerase (269 aa).

Residue 8–10 (NWK) participates in substrate binding. His-105 functions as the Electrophile in the catalytic mechanism. Catalysis depends on Glu-183, which acts as the Proton acceptor. Residues Gly-189, Ser-227, and 248–249 (GG) contribute to the substrate site.

It belongs to the triosephosphate isomerase family. In terms of assembly, homodimer.

Its subcellular location is the cytoplasm. It catalyses the reaction D-glyceraldehyde 3-phosphate = dihydroxyacetone phosphate. It functions in the pathway carbohydrate biosynthesis; gluconeogenesis. The protein operates within carbohydrate degradation; glycolysis; D-glyceraldehyde 3-phosphate from glycerone phosphate: step 1/1. Functionally, involved in the gluconeogenesis. Catalyzes stereospecifically the conversion of dihydroxyacetone phosphate (DHAP) to D-glyceraldehyde-3-phosphate (G3P). The polypeptide is Triosephosphate isomerase (Psychrobacter cryohalolentis (strain ATCC BAA-1226 / DSM 17306 / VKM B-2378 / K5)).